Reading from the N-terminus, the 940-residue chain is Valine--tRNA ligase (940 aa).

A 'HIGH' region motif is present at residues P47–H57. The 'KMSKS' region signature appears at K564–S568. Position 567 (K567) interacts with ATP. The stretch at V873–A937 forms a coiled coil.

This sequence belongs to the class-I aminoacyl-tRNA synthetase family. ValS type 1 subfamily. Monomer.

Its subcellular location is the cytoplasm. The catalysed reaction is tRNA(Val) + L-valine + ATP = L-valyl-tRNA(Val) + AMP + diphosphate. Catalyzes the attachment of valine to tRNA(Val). As ValRS can inadvertently accommodate and process structurally similar amino acids such as threonine, to avoid such errors, it has a 'posttransfer' editing activity that hydrolyzes mischarged Thr-tRNA(Val) in a tRNA-dependent manner. The protein is Valine--tRNA ligase of Chlamydia abortus (strain DSM 27085 / S26/3) (Chlamydophila abortus).